A 449-amino-acid polypeptide reads, in one-letter code: Glucose-6-phosphate isomerase (449 aa).

The active-site Proton donor is the Glu-291. Residues His-312 and Lys-426 contribute to the active site.

The protein belongs to the GPI family.

The protein localises to the cytoplasm. The catalysed reaction is alpha-D-glucose 6-phosphate = beta-D-fructose 6-phosphate. Its pathway is carbohydrate biosynthesis; gluconeogenesis. The protein operates within carbohydrate degradation; glycolysis; D-glyceraldehyde 3-phosphate and glycerone phosphate from D-glucose: step 2/4. In terms of biological role, catalyzes the reversible isomerization of glucose-6-phosphate to fructose-6-phosphate. This Clostridium botulinum (strain Alaska E43 / Type E3) protein is Glucose-6-phosphate isomerase.